Reading from the N-terminus, the 639-residue chain is Chaperone protein DnaK (639 aa).

Position 199 is a phosphothreonine; by autocatalysis (T199). Low complexity predominate over residues 602–613 (AQAQQAAAGAEG). The disordered stretch occupies residues 602–639 (AQAQQAAAGAEGQPEDASAKQDDDVVDAEFEEVKDDKK). Acidic residues predominate over residues 625–639 (DVVDAEFEEVKDDKK).

The protein belongs to the heat shock protein 70 family.

Functionally, acts as a chaperone. The polypeptide is Chaperone protein DnaK (Pseudoalteromonas atlantica (strain T6c / ATCC BAA-1087)).